The following is a 417-amino-acid chain: Phosphoglycerate kinase, cytosolic (417 aa).

Residues Val23, Asp24, Phe25, Asn26, Arg39, Ser61, His62, Gly64, Arg65, Arg132, His168, and Arg169 each contribute to the (2R)-3-phosphoglycerate site. 2 residues coordinate ADP: Gly214 and Ala215. Residue Gly214 participates in CDP binding. Residues Ala215 and Lys216 each coordinate AMP. Ala215 contributes to the ATP binding site. Mg(2+) is bound at residue Ala215. Residue Lys216 participates in (2R)-3-phosphoglycerate binding. Asp219 is a CDP binding site. Position 219 (Asp219) interacts with Mg(2+). The ADP site is built by Lys220 and Gly238. Lys220 is a binding site for AMP. ATP is bound at residue Lys220. Residue Gly238 coordinates CDP. Positions 239 and 311 each coordinate AMP. The ATP site is built by Ala239 and Ala311. Residues Ala311 and Asn335 each contribute to the ADP site. The CDP site is built by Gly336 and Phe341. ADP contacts are provided by Phe341, Glu342, Asp374, and Ser375. Residue Glu342 participates in AMP binding. The ATP site is built by Glu342, Asp374, and Ser375. Position 374 (Asp374) interacts with Mg(2+).

The protein belongs to the phosphoglycerate kinase family. Monomer. Mg(2+) serves as cofactor.

The protein resides in the cytoplasm. The enzyme catalyses (2R)-3-phosphoglycerate + ATP = (2R)-3-phospho-glyceroyl phosphate + ADP. It functions in the pathway carbohydrate degradation; glycolysis; pyruvate from D-glyceraldehyde 3-phosphate: step 2/5. This Leishmania major protein is Phosphoglycerate kinase, cytosolic (PGKB).